The following is a 141-amino-acid chain: Hemoglobin subunit alpha-1/2 (141 aa).

A Globin domain is found at 1 to 141 (VLSPADKTNV…VSTVLTSKYR (141 aa)). Ser3 carries the phosphoserine modification. At Lys7 the chain carries N6-succinyllysine. The residue at position 8 (Thr8) is a Phosphothreonine. Residue Lys11 is modified to N6-succinyllysine. Lys16 is subject to N6-acetyllysine; alternate. Lys16 bears the N6-succinyllysine; alternate mark. Tyr24 carries the phosphotyrosine modification. Ser35 is modified (phosphoserine). Residue Lys40 is modified to N6-succinyllysine. Phosphoserine is present on Ser49. Residue His58 participates in O2 binding. Residue His87 participates in heme b binding. Residue Ser102 is modified to Phosphoserine. The residue at position 108 (Thr108) is a Phosphothreonine. Ser124 and Ser131 each carry phosphoserine. Residues Thr134 and Thr137 each carry the phosphothreonine modification. Residue Ser138 is modified to Phosphoserine.

This sequence belongs to the globin family. Heterotetramer of two alpha chains and two beta chains. Red blood cells.

Functionally, involved in oxygen transport from the lung to the various peripheral tissues. The sequence is that of Hemoglobin subunit alpha-1/2 from Macaca speciosa (Stump-tail macaque).